A 494-amino-acid polypeptide reads, in one-letter code: 3-octaprenyl-4-hydroxybenzoate carboxy-lyase (494 aa).

Asparagine 172 is a binding site for Mn(2+). Prenylated FMN is bound by residues 175–177 (IYR), 189–191 (RWL), and 194–195 (RG). Glutamate 238 is a Mn(2+) binding site. The active-site Proton donor is the aspartate 287.

This sequence belongs to the UbiD family. In terms of assembly, homohexamer. Requires prenylated FMN as cofactor. The cofactor is Mn(2+).

Its subcellular location is the cell membrane. The enzyme catalyses a 4-hydroxy-3-(all-trans-polyprenyl)benzoate + H(+) = a 2-(all-trans-polyprenyl)phenol + CO2. It functions in the pathway cofactor biosynthesis; ubiquinone biosynthesis. In terms of biological role, catalyzes the decarboxylation of 3-octaprenyl-4-hydroxy benzoate to 2-octaprenylphenol, an intermediate step in ubiquinone biosynthesis. This chain is 3-octaprenyl-4-hydroxybenzoate carboxy-lyase, found in Escherichia coli O139:H28 (strain E24377A / ETEC).